Here is a 486-residue protein sequence, read N- to C-terminus: NADH-quinone oxidoreductase subunit N (486 aa).

A run of 14 helical transmembrane segments spans residues 8-28 (FIAL…MLAV), 38-58 (ATLS…VLGV), 73-93 (ACFY…LAHA), 105-125 (LYLL…AQHL), 128-148 (LFIG…YAFF), 169-189 (FLLF…FAGL), 196-216 (HVLS…GLGF), 235-255 (PAPV…AVLL), 269-289 (LLNI…NLLA), 304-324 (IAHL…AVEA), 325-345 (VGVY…VITL), 373-393 (AVMT…GFIG), 405-427 (HLWW…YLRV), and 454-474 (IMLV…QPLL).

The protein belongs to the complex I subunit 2 family. NDH-1 is composed of 13 different subunits. Subunits NuoA, H, J, K, L, M, N constitute the membrane sector of the complex.

Its subcellular location is the cell inner membrane. The enzyme catalyses a quinone + NADH + 5 H(+)(in) = a quinol + NAD(+) + 4 H(+)(out). NDH-1 shuttles electrons from NADH, via FMN and iron-sulfur (Fe-S) centers, to quinones in the respiratory chain. The immediate electron acceptor for the enzyme in this species is believed to be ubiquinone. Couples the redox reaction to proton translocation (for every two electrons transferred, four hydrogen ions are translocated across the cytoplasmic membrane), and thus conserves the redox energy in a proton gradient. The polypeptide is NADH-quinone oxidoreductase subunit N (Pseudomonas aeruginosa (strain ATCC 15692 / DSM 22644 / CIP 104116 / JCM 14847 / LMG 12228 / 1C / PRS 101 / PAO1)).